A 209-amino-acid chain; its full sequence is Large ribosomal subunit protein uL3 (209 aa).

The disordered stretch occupies residues 126–148 (HGQSRGPMAHGSRYHRRPGSMGP).

Belongs to the universal ribosomal protein uL3 family. Part of the 50S ribosomal subunit. Forms a cluster with proteins L14 and L19.

Functionally, one of the primary rRNA binding proteins, it binds directly near the 3'-end of the 23S rRNA, where it nucleates assembly of the 50S subunit. In Listeria monocytogenes serotype 4b (strain CLIP80459), this protein is Large ribosomal subunit protein uL3.